The chain runs to 220 residues: Putative respiratory nitrate reductase subunit Rieske (220 aa).

Residues 118–206 (KAPTLLVRHA…ITVSSEGYLI (89 aa)) enclose the Rieske domain. Residues cysteine 151, histidine 153, cysteine 168, and histidine 171 each coordinate [2Fe-2S] cluster. Cysteine 156 and cysteine 170 form a disulfide bridge.

In terms of assembly, probable multiprotein complex; a catalytic heterodimer of an alpha and beta chain is proposed to associate with additional subunits involved in membrane attachment and electron transfer. [2Fe-2S] cluster is required as a cofactor.

The protein resides in the cell membrane. In terms of biological role, the respiratory membrane-bound nitrate reductase enzyme complex plays a role in generation of metabolic energy by using nitrate as a terminal electron acceptor during anaerobic conditions. Proposed Rieske subunit involved in a protonmotive Q-cycle mechanism-based electron transfer electrons to the beta subunit. The sequence is that of Putative respiratory nitrate reductase subunit Rieske (narB) from Haloferax mediterranei (strain ATCC 33500 / DSM 1411 / JCM 8866 / NBRC 14739 / NCIMB 2177 / R-4) (Halobacterium mediterranei).